Reading from the N-terminus, the 282-residue chain is MEMO1 family protein Cmaq_1590 (282 aa).

It belongs to the MEMO1 family.

This chain is MEMO1 family protein Cmaq_1590, found in Caldivirga maquilingensis (strain ATCC 700844 / DSM 13496 / JCM 10307 / IC-167).